The chain runs to 441 residues: MPGPKNTILIEGSFEELTDEFAQYIDTLKKSQGEEASNLQGETAELLKENKKDDVLKKLVVGAQALNQAPEKVCAIEFIAAYNLLIHLVNQSPSVNMYLPKICQNLSAPISSSPQNGGGLALSILSTIFNTTSAGSEVRYHVLLAILRVIRATSNFETLRPQLKQLDKWLEAWETEEEDSRKLYLAVSDVASDAGESEQAYTYLLRALRTYPSEEASSPEARELSLRALKSALTHPTHFDFQDLTDLDSIQALRNSDPIFFQLLEIFNSDLLDDYNDFKDEHDGWVEESGLDGAALNRKMRLLTLASMAASAGQTRSLPYDKIAKALQISSEEVEMWVIDVIRAGLVEGKLSQLNQTFLIHRSTYRVFGDNQWREVSSRLDMWRNSLTGVLQVIQAEKQRFLQEKEEEANKADNKYDSARGFQRGGQRKQPRALDDDMGLE.

One can recognise a PCI domain in the interval 196–365 (ESEQAYTYLL…QTFLIHRSTY (170 aa)). Residues 405 to 418 (KEEEANKADNKYDS) show a composition bias toward basic and acidic residues. The segment at 405–441 (KEEEANKADNKYDSARGFQRGGQRKQPRALDDDMGLE) is disordered.

This sequence belongs to the eIF-3 subunit M family. As to quaternary structure, component of the eukaryotic translation initiation factor 3 (eIF-3) complex.

The protein resides in the cytoplasm. Functionally, component of the eukaryotic translation initiation factor 3 (eIF-3) complex, which is involved in protein synthesis of a specialized repertoire of mRNAs and, together with other initiation factors, stimulates binding of mRNA and methionyl-tRNAi to the 40S ribosome. The eIF-3 complex specifically targets and initiates translation of a subset of mRNAs involved in cell proliferation. The chain is Eukaryotic translation initiation factor 3 subunit M from Phaeosphaeria nodorum (strain SN15 / ATCC MYA-4574 / FGSC 10173) (Glume blotch fungus).